The chain runs to 120 residues: uncharacterized protein (120 aa).

The protein to M.tuberculosis Rv0026 and Rv0739.

This is an uncharacterized protein from Mycobacterium tuberculosis (strain CDC 1551 / Oshkosh).